Here is a 518-residue protein sequence, read N- to C-terminus: Sodium-dependent glucose transporter 1 (518 aa).

Helical transmembrane passes span 19 to 39 (TFQD…FIFV), 53 to 73 (GFLV…SATT), 82 to 102 (CKTA…IGIL), 107 to 127 (NVLI…ALHF), 139 to 159 (LAKL…SDFH), 221 to 241 (FRRA…FFFY), 307 to 327 (TSSL…IATS), 347 to 367 (YTTI…LGEM), 376 to 396 (LQGK…ASIA), 400 to 420 (LFPV…KEDR), 438 to 458 (EEEN…EMIE), and 466 to 486 (SIIE…YNQY). Residues 414–426 (RQRKEDRKSEDQK) show a composition bias toward basic and acidic residues. The interval 414 to 448 (RQRKEDRKSEDQKALLSSSGLNEYEEENEEEDAEK) is disordered. Over residues 436 to 448 (EYEEENEEEDAEK) the composition is skewed to acidic residues.

The protein belongs to the major facilitator superfamily.

It localises to the apical cell membrane. Functionally, may function as a sodium-dependent glucose transporter. Potential channels for urea in the inner medulla of kidney. The sequence is that of Sodium-dependent glucose transporter 1 from Homo sapiens (Human).